We begin with the raw amino-acid sequence, 472 residues long: Major capsid protein (472 aa).

Belongs to the NCLDV major capsid protein family. Homotrimer. The N-terminus is blocked.

It is found in the virion. Functionally, major capsid protein that self assembles to form an icosahedral capsid. Represents around 50% of the total virion protein mass. The sequence is that of Major capsid protein (MCP) from Simulium (IIV-22).